The primary structure comprises 129 residues: uncharacterized protein (129 aa).

Residues 85–108 (SSAADSDDSSSCSECDSDALLSDD) show a composition bias toward low complexity. A disordered region spans residues 85–110 (SSAADSDDSSSCSECDSDALLSDDGP).

This is an uncharacterized protein from Microplitis demolitor (Parasitoid wasp).